Here is an 89-residue protein sequence, read N- to C-terminus: Defensin-like protein 250 (89 aa).

The first 23 residues, 1-23, serve as a signal peptide directing secretion; it reads MKLAAIFLVSCVLLSLLPSLTIA. 4 disulfides stabilise this stretch: Cys-29–Cys-86, Cys-40–Cys-69, Cys-48–Cys-79, and Cys-67–Cys-81.

Belongs to the DEFL family.

It localises to the secreted. The polypeptide is Defensin-like protein 250 (SCRL8) (Arabidopsis thaliana (Mouse-ear cress)).